A 577-amino-acid polypeptide reads, in one-letter code: Probable L-gulonolactone oxidase 4 (577 aa).

A signal peptide spans 1–17 (MSFWLSLIFCFFTFASS). Positions 46-228 (SICKAAKVEY…SQVTFELQPM (183 aa)) constitute an FAD-binding PCMH-type domain.

Belongs to the oxygen-dependent FAD-linked oxidoreductase family. It depends on FAD as a cofactor.

It catalyses the reaction L-gulono-1,4-lactone + O2 = L-ascorbate + H2O2 + H(+). It functions in the pathway cofactor biosynthesis; L-ascorbate biosynthesis. Its function is as follows. May be involved in the biosynthesis of ascorbic acid. The sequence is that of Probable L-gulonolactone oxidase 4 from Arabidopsis thaliana (Mouse-ear cress).